The following is a 179-amino-acid chain: Adenine phosphoribosyltransferase (179 aa).

It belongs to the purine/pyrimidine phosphoribosyltransferase family. As to quaternary structure, homodimer.

It is found in the cytoplasm. The catalysed reaction is AMP + diphosphate = 5-phospho-alpha-D-ribose 1-diphosphate + adenine. The protein operates within purine metabolism; AMP biosynthesis via salvage pathway; AMP from adenine: step 1/1. In terms of biological role, catalyzes a salvage reaction resulting in the formation of AMP, that is energically less costly than de novo synthesis. This Helicobacter acinonychis (strain Sheeba) protein is Adenine phosphoribosyltransferase.